Consider the following 140-residue polypeptide: Large ribosomal subunit protein uL14 (140 aa).

It belongs to the universal ribosomal protein uL14 family. In terms of assembly, part of the 50S ribosomal subunit. Forms a cluster with proteins L3 and L24e, part of which may contact the 16S rRNA in 2 intersubunit bridges.

Functionally, binds to 23S rRNA. Forms part of two intersubunit bridges in the 70S ribosome. The polypeptide is Large ribosomal subunit protein uL14 (Nitrosopumilus maritimus (strain SCM1)).